Here is a 222-residue protein sequence, read N- to C-terminus: Triosephosphate isomerase (222 aa).

Position 9 to 11 (9 to 11 (NYK)) interacts with substrate. The active-site Electrophile is the His-93. Residue Glu-141 is the Proton acceptor of the active site. Residues Ile-146, Gly-181, and 202-203 (AS) each bind substrate.

The protein belongs to the triosephosphate isomerase family. As to quaternary structure, homotetramer; dimer of dimers.

It is found in the cytoplasm. It carries out the reaction D-glyceraldehyde 3-phosphate = dihydroxyacetone phosphate. Its pathway is carbohydrate biosynthesis; gluconeogenesis. It functions in the pathway carbohydrate degradation; glycolysis; D-glyceraldehyde 3-phosphate from glycerone phosphate: step 1/1. Functionally, involved in the gluconeogenesis. Catalyzes stereospecifically the conversion of dihydroxyacetone phosphate (DHAP) to D-glyceraldehyde-3-phosphate (G3P). The protein is Triosephosphate isomerase of Methanobrevibacter smithii (strain ATCC 35061 / DSM 861 / OCM 144 / PS).